The sequence spans 129 residues: uncharacterized protein (129 aa).

This is an uncharacterized protein from Acheta domesticus (House cricket).